Here is a 387-residue protein sequence, read N- to C-terminus: Yellow-related salivary protein ASP2 (387 aa).

Positions 1–18 (MKIFLCLIVVVSLQGVLA) are cleaved as a signal peptide.

Belongs to the major royal jelly protein family. Female salivary gland (at protein level).

The protein resides in the secreted. In terms of biological role, probably modulates blood feeding of sand flies on vertebrate species by binding and sequestering different mediators involved in the host response. Binds biogenic amines. Binds octopamine with high affinity. Binds serotonin and dopamine with medium affinity. Poorly binds histamine. Does not bind noradrenaline and adrenaline. This is Yellow-related salivary protein ASP2 from Phlebotomus orientalis (Phlebotomine sand fly).